The chain runs to 208 residues: Protein-L-isoaspartate O-methyltransferase (208 aa).

Ser-59 is a catalytic residue.

The protein belongs to the methyltransferase superfamily. L-isoaspartyl/D-aspartyl protein methyltransferase family.

The protein resides in the cytoplasm. It carries out the reaction [protein]-L-isoaspartate + S-adenosyl-L-methionine = [protein]-L-isoaspartate alpha-methyl ester + S-adenosyl-L-homocysteine. Catalyzes the methyl esterification of L-isoaspartyl residues in peptides and proteins that result from spontaneous decomposition of normal L-aspartyl and L-asparaginyl residues. It plays a role in the repair and/or degradation of damaged proteins. This is Protein-L-isoaspartate O-methyltransferase from Aliivibrio fischeri (strain ATCC 700601 / ES114) (Vibrio fischeri).